The primary structure comprises 476 residues: Aspartyl/glutamyl-tRNA(Asn/Gln) amidotransferase subunit B (476 aa).

The protein belongs to the GatB/GatE family. GatB subfamily. In terms of assembly, heterotrimer of A, B and C subunits.

The enzyme catalyses L-glutamyl-tRNA(Gln) + L-glutamine + ATP + H2O = L-glutaminyl-tRNA(Gln) + L-glutamate + ADP + phosphate + H(+). The catalysed reaction is L-aspartyl-tRNA(Asn) + L-glutamine + ATP + H2O = L-asparaginyl-tRNA(Asn) + L-glutamate + ADP + phosphate + 2 H(+). Its function is as follows. Allows the formation of correctly charged Asn-tRNA(Asn) or Gln-tRNA(Gln) through the transamidation of misacylated Asp-tRNA(Asn) or Glu-tRNA(Gln) in organisms which lack either or both of asparaginyl-tRNA or glutaminyl-tRNA synthetases. The reaction takes place in the presence of glutamine and ATP through an activated phospho-Asp-tRNA(Asn) or phospho-Glu-tRNA(Gln). This is Aspartyl/glutamyl-tRNA(Asn/Gln) amidotransferase subunit B from Variovorax paradoxus (strain S110).